We begin with the raw amino-acid sequence, 128 residues long: Putative pre-16S rRNA nuclease (128 aa).

Belongs to the YqgF nuclease family.

It localises to the cytoplasm. Could be a nuclease involved in processing of the 5'-end of pre-16S rRNA. The sequence is that of Putative pre-16S rRNA nuclease from Campylobacter lari (strain RM2100 / D67 / ATCC BAA-1060).